A 656-amino-acid chain; its full sequence is F-box/LRR-repeat protein 10 (656 aa).

An F-box domain is found at 20-66 (ERSLDLLPAALLETIMTKLDVASLCSLASTCKTLKSCVTRVLTFTPN). LRR repeat units follow at residues 71–96 (NVSLSMETVRPLLFPNQQLSSLKLDC), 120–145 (CRDFSGDLISEIGRKCKDLRLLCLGS), 151–176 (GRSISRCALEDLLNGCSHLEVLALMF), 194–221 (SDRLTHLELGHITSRMMTQLLTSTEISG), 243–268 (VDCITDAVVKAISKSLPSLIDLDIRD), 277–301 (VSDLTDFGLHEINQNGKLKHLSLIR), 310–335 (FRRVSDQGMLFLADKCLGMETICLGG), 336–361 (FCRVTDAGFKTILHSCASLSKFSIYH), 362–387 (GPKLTDLVFHDILATTLSLSHVSLRR), 388–412 (CHLLTDHAIQKLASSLKLENLDLRG), 413–437 (CRNLRDETLTAVSHLPKLKVLLLDG), 439–463 (DISDTGLSYLKEGVLDSLVSLSVRG), 464–491 (CRNLTDKFMSTLFDGSSKLALRELDLSN), 492–517 (LPNLTDAAIFALAKSGAPITKLQLRE), 518–551 (CRLIGDASVMALASTRVYEDECPGSSLCLLDLYD), and 552–578 (CGGITQLSFKWLKKPFFPRLKWLGITG). Residues 632–656 (ILGDEGDVEMEDAEDESEEDASEED) are disordered.

The polypeptide is F-box/LRR-repeat protein 10 (FBL10) (Arabidopsis thaliana (Mouse-ear cress)).